The sequence spans 130 residues: Glycine cleavage system H protein (130 aa).

One can recognise a Lipoyl-binding domain in the interval 28–110 (TVRIGITSVA…FGEGWLFEVE (83 aa)). Residue Lys69 is modified to N6-lipoyllysine.

This sequence belongs to the GcvH family. The glycine cleavage system is composed of four proteins: P, T, L and H. (R)-lipoate is required as a cofactor.

Its function is as follows. The glycine cleavage system catalyzes the degradation of glycine. The H protein shuttles the methylamine group of glycine from the P protein to the T protein. The chain is Glycine cleavage system H protein from Corynebacterium aurimucosum (strain ATCC 700975 / DSM 44827 / CIP 107346 / CN-1) (Corynebacterium nigricans).